The primary structure comprises 311 residues: Dehydrogenase/reductase SDR family member 7C (311 aa).

Residues 1 to 18 form the signal peptide; sequence MGVTAVLMLPLLLLGISG. Residues Ser47, Leu49, Tyr191, Lys195, and Ser226 each coordinate NAD(+). Tyr191 (proton acceptor) is an active-site residue.

It belongs to the short-chain dehydrogenases/reductases (SDR) family.

The protein localises to the sarcoplasmic reticulum membrane. It catalyses the reaction all-trans-retinol + NAD(+) = all-trans-retinal + NADH + H(+). Functionally, NADH-dependent oxidoreductase which catalyzes the oxidation of all-trans-retinol to all-trans-retinal. Plays a role in the regulation of cardiac and skeletal muscle metabolic functions. Maintains Ca(2+) intracellular homeostasis by repressing Ca(2+) release from the sarcoplasmic reticulum (SR) in myotubes, possibly through local alternations in NAD/NADH or retinol/retinal. Also plays a role in Ca(2+) homeostasis by controlling Ca(2+) overload in the cytosol and the SR in myotubes. Involved in glucose uptake into skeletal muscles and muscle performance by activating PI3K and mTORC2-mediated AKT1 phosphorylation signaling pathways, possibly through the action of its downstream catalytic product all-trans-retinoic acid. This is Dehydrogenase/reductase SDR family member 7C (DHRS7C) from Bos taurus (Bovine).